Reading from the N-terminus, the 475-residue chain is Ribulose bisphosphate carboxylase large chain (475 aa).

The propeptide occupies 1–2; the sequence is MS. P3 is subject to N-acetylproline. The residue at position 14 (K14) is an N6,N6,N6-trimethyllysine. Residues N123 and T173 each coordinate substrate. K175 functions as the Proton acceptor in the catalytic mechanism. A substrate-binding site is contributed by K177. K201, D203, and E204 together coordinate Mg(2+). At K201 the chain carries N6-carboxylysine. H294 functions as the Proton acceptor in the catalytic mechanism. The substrate site is built by R295, H327, and S379.

Belongs to the RuBisCO large chain family. Type I subfamily. Heterohexadecamer of 8 large chains and 8 small chains; disulfide-linked. The disulfide link is formed within the large subunit homodimers. Mg(2+) serves as cofactor. Post-translationally, the disulfide bond which can form in the large chain dimeric partners within the hexadecamer appears to be associated with oxidative stress and protein turnover.

The protein localises to the plastid. Its subcellular location is the chloroplast. It catalyses the reaction 2 (2R)-3-phosphoglycerate + 2 H(+) = D-ribulose 1,5-bisphosphate + CO2 + H2O. The enzyme catalyses D-ribulose 1,5-bisphosphate + O2 = 2-phosphoglycolate + (2R)-3-phosphoglycerate + 2 H(+). Its function is as follows. RuBisCO catalyzes two reactions: the carboxylation of D-ribulose 1,5-bisphosphate, the primary event in carbon dioxide fixation, as well as the oxidative fragmentation of the pentose substrate in the photorespiration process. Both reactions occur simultaneously and in competition at the same active site. The polypeptide is Ribulose bisphosphate carboxylase large chain (Larix occidentalis (Western larch)).